The sequence spans 190 residues: MPRFISFEGIDGAGKTTLAKKVYEVLKKKGYNVILTQEPFTREITELIKKAGWNDPVLLTLLFSADRAFHIKWIMEQKPEIVLMDRYFHSTIAYQSVLGLDEKWIEEVNSKFPKPDIVFLLDIKVNEAIKRIRKDDQFNFEEKIATLEAVRKKYLELARKYNFIVLDAMSKIEELTEKTVQIICSLVKCS.

An ATP-binding site is contributed by 9 to 16; that stretch reads GIDGAGKT.

The protein belongs to the thymidylate kinase family.

The enzyme catalyses dTMP + ATP = dTDP + ADP. The sequence is that of Probable thymidylate kinase (tmk1) from Sulfurisphaera tokodaii (strain DSM 16993 / JCM 10545 / NBRC 100140 / 7) (Sulfolobus tokodaii).